The chain runs to 360 residues: Histidinol-phosphate aminotransferase (360 aa).

Position 211 is an N6-(pyridoxal phosphate)lysine (K211).

Belongs to the class-II pyridoxal-phosphate-dependent aminotransferase family. Histidinol-phosphate aminotransferase subfamily. As to quaternary structure, homodimer. Pyridoxal 5'-phosphate is required as a cofactor.

The enzyme catalyses L-histidinol phosphate + 2-oxoglutarate = 3-(imidazol-4-yl)-2-oxopropyl phosphate + L-glutamate. The protein operates within amino-acid biosynthesis; L-histidine biosynthesis; L-histidine from 5-phospho-alpha-D-ribose 1-diphosphate: step 7/9. This is Histidinol-phosphate aminotransferase from Cronobacter sakazakii (strain ATCC BAA-894) (Enterobacter sakazakii).